Here is a 443-residue protein sequence, read N- to C-terminus: Ribosomal protein uS12 methylthiotransferase RimO (443 aa).

The region spanning 11 to 121 is the MTTase N-terminal domain; that stretch reads PTVGFVSLGC…VMEAVHGALP (111 aa). [4Fe-4S] cluster-binding residues include Cys20, Cys56, Cys85, Cys152, Cys156, and Cys159. The 238-residue stretch at 138-375 folds into the Radical SAM core domain; the sequence is LTPRHYAYLK…METQAEISAA (238 aa). Residues 378 to 443 form the TRAM domain; the sequence is DAKIGRTIEV…DAHDLWATPV (66 aa).

It belongs to the methylthiotransferase family. RimO subfamily. Requires [4Fe-4S] cluster as cofactor.

The protein resides in the cytoplasm. It carries out the reaction L-aspartate(89)-[ribosomal protein uS12]-hydrogen + (sulfur carrier)-SH + AH2 + 2 S-adenosyl-L-methionine = 3-methylsulfanyl-L-aspartate(89)-[ribosomal protein uS12]-hydrogen + (sulfur carrier)-H + 5'-deoxyadenosine + L-methionine + A + S-adenosyl-L-homocysteine + 2 H(+). Its function is as follows. Catalyzes the methylthiolation of an aspartic acid residue of ribosomal protein uS12. The chain is Ribosomal protein uS12 methylthiotransferase RimO from Thiobacillus denitrificans (strain ATCC 25259 / T1).